Reading from the N-terminus, the 185-residue chain is Large ribosomal subunit protein uL5 (185 aa).

The protein belongs to the universal ribosomal protein uL5 family. In terms of assembly, part of the 50S ribosomal subunit; part of the 5S rRNA/L5/L18/L25 subcomplex. Contacts the 5S rRNA and the P site tRNA. Forms a bridge to the 30S subunit in the 70S ribosome.

Its function is as follows. This is one of the proteins that bind and probably mediate the attachment of the 5S RNA into the large ribosomal subunit, where it forms part of the central protuberance. In the 70S ribosome it contacts protein S13 of the 30S subunit (bridge B1b), connecting the 2 subunits; this bridge is implicated in subunit movement. Contacts the P site tRNA; the 5S rRNA and some of its associated proteins might help stabilize positioning of ribosome-bound tRNAs. This chain is Large ribosomal subunit protein uL5, found in Sinorhizobium medicae (strain WSM419) (Ensifer medicae).